The sequence spans 333 residues: DNA-directed RNA polymerase subunit alpha (333 aa).

Positions 1-239 are alpha N-terminal domain (alpha-NTD); it reads MSAVLDKGSL…TQARCFLNIA (239 aa). The tract at residues 259–333 is alpha C-terminal domain (alpha-CTD); that stretch reads DASDLLSARI…SLGMNLDSHG (75 aa).

The protein belongs to the RNA polymerase alpha chain family. As to quaternary structure, homodimer. The RNAP catalytic core consists of 2 alpha, 1 beta, 1 beta' and 1 omega subunit. When a sigma factor is associated with the core the holoenzyme is formed, which can initiate transcription.

The enzyme catalyses RNA(n) + a ribonucleoside 5'-triphosphate = RNA(n+1) + diphosphate. In terms of biological role, DNA-dependent RNA polymerase catalyzes the transcription of DNA into RNA using the four ribonucleoside triphosphates as substrates. This is DNA-directed RNA polymerase subunit alpha from Neorickettsia sennetsu (strain ATCC VR-367 / Miyayama) (Ehrlichia sennetsu).